A 265-amino-acid chain; its full sequence is Anaphase-promoting complex subunit 9 (265 aa).

The APC/C is composed of at least 13 subunits that stay tightly associated throughout the cell cycle: APC1, APC2, APC4, APC5, APC9, APC11, CDC16, CDC23, CDC26, CDC27, DOC1, MND2 and SWM1.

It localises to the cytoplasm. The protein resides in the nucleus. It participates in protein modification; protein ubiquitination. Functionally, component of the anaphase promoting complex/cyclosome (APC/C), a cell cycle-regulated E3 ubiquitin-protein ligase complex that controls progression through mitosis and the G1 phase of the cell cycle. The APC/C is thought to confer substrate specificity and, in the presence of ubiquitin-conjugating E2 enzymes, it catalyzes the formation of protein-ubiquitin conjugates that are subsequently degraded by the 26S proteasome. In early mitosis, the APC/C is activated by CDC20 and targets securin PDS1, the B-type cyclin CLB5, and other anaphase inhibitory proteins for proteolysis, thereby triggering the separation of sister chromatids at the metaphase-to-anaphase transition. In late mitosis and in G1, degradation of CLB5 allows activation of the APC/C by CDH1, which is needed to destroy CDC20 and the B-type cyclin CLB2 to allow exit from mitosis and creating the low CDK state necessary for cytokinesis and for reforming prereplicative complexes in G1 prior to another round of replication. This Saccharomyces cerevisiae (strain ATCC 204508 / S288c) (Baker's yeast) protein is Anaphase-promoting complex subunit 9 (APC9).